The sequence spans 365 residues: tRNA 2-selenouridine synthase (365 aa).

Residues 15 to 138 (LVNDHPIMDA…MRQFLIETID (124 aa)) enclose the Rhodanese domain. Catalysis depends on cysteine 98, which acts as the S-selanylcysteine intermediate.

Belongs to the SelU family. Monomer.

It carries out the reaction 5-methylaminomethyl-2-thiouridine(34) in tRNA + selenophosphate + (2E)-geranyl diphosphate + H2O + H(+) = 5-methylaminomethyl-2-selenouridine(34) in tRNA + (2E)-thiogeraniol + phosphate + diphosphate. The enzyme catalyses 5-methylaminomethyl-2-thiouridine(34) in tRNA + (2E)-geranyl diphosphate = 5-methylaminomethyl-S-(2E)-geranyl-thiouridine(34) in tRNA + diphosphate. The catalysed reaction is 5-methylaminomethyl-S-(2E)-geranyl-thiouridine(34) in tRNA + selenophosphate + H(+) = 5-methylaminomethyl-2-(Se-phospho)selenouridine(34) in tRNA + (2E)-thiogeraniol. It catalyses the reaction 5-methylaminomethyl-2-(Se-phospho)selenouridine(34) in tRNA + H2O = 5-methylaminomethyl-2-selenouridine(34) in tRNA + phosphate. Its function is as follows. Involved in the post-transcriptional modification of the uridine at the wobble position (U34) of tRNA(Lys), tRNA(Glu) and tRNA(Gln). Catalyzes the conversion of 2-thiouridine (S2U-RNA) to 2-selenouridine (Se2U-RNA). Acts in a two-step process involving geranylation of 2-thiouridine (S2U) to S-geranyl-2-thiouridine (geS2U) and subsequent selenation of the latter derivative to 2-selenouridine (Se2U) in the tRNA chain. This is tRNA 2-selenouridine synthase from Shewanella pealeana (strain ATCC 700345 / ANG-SQ1).